The following is a 265-amino-acid chain: Ribosomal RNA small subunit methyltransferase A (265 aa).

6 residues coordinate S-adenosyl-L-methionine: histidine 13, leucine 15, glycine 40, glutamate 61, aspartate 85, and asparagine 103.

It belongs to the class I-like SAM-binding methyltransferase superfamily. rRNA adenine N(6)-methyltransferase family. RsmA subfamily.

It is found in the cytoplasm. It carries out the reaction adenosine(1518)/adenosine(1519) in 16S rRNA + 4 S-adenosyl-L-methionine = N(6)-dimethyladenosine(1518)/N(6)-dimethyladenosine(1519) in 16S rRNA + 4 S-adenosyl-L-homocysteine + 4 H(+). Specifically dimethylates two adjacent adenosines (A1518 and A1519) in the loop of a conserved hairpin near the 3'-end of 16S rRNA in the 30S particle. May play a critical role in biogenesis of 30S subunits. In Bordetella bronchiseptica (strain ATCC BAA-588 / NCTC 13252 / RB50) (Alcaligenes bronchisepticus), this protein is Ribosomal RNA small subunit methyltransferase A.